The primary structure comprises 346 residues: Protein RecA (346 aa).

68–75 (GPESSGKT) contacts ATP.

This sequence belongs to the RecA family.

It is found in the cytoplasm. Functionally, can catalyze the hydrolysis of ATP in the presence of single-stranded DNA, the ATP-dependent uptake of single-stranded DNA by duplex DNA, and the ATP-dependent hybridization of homologous single-stranded DNAs. It interacts with LexA causing its activation and leading to its autocatalytic cleavage. The chain is Protein RecA from Heliobacterium modesticaldum (strain ATCC 51547 / Ice1).